We begin with the raw amino-acid sequence, 354 residues long: Isocitrate dehydrogenase [NAD] regulatory subunit A, mitochondrial (354 aa).

Substrate is bound by residues serine 95, asparagine 97, arginine 101, arginine 111, and arginine 132. Aspartate 219, aspartate 243, and aspartate 247 together coordinate Mg(2+). NADP(+)-binding positions include 276-282 (HGTAPDI) and asparagine 289.

It belongs to the isocitrate and isopropylmalate dehydrogenases family. In terms of assembly, heterooligomer of catalytic and regulatory subunits. Mg(2+) serves as cofactor. Mn(2+) is required as a cofactor.

It is found in the mitochondrion. It carries out the reaction D-threo-isocitrate + NAD(+) = 2-oxoglutarate + CO2 + NADH. Functionally, performs an essential role in the oxidative function of the citric acid cycle. This is Isocitrate dehydrogenase [NAD] regulatory subunit A, mitochondrial (idhA) from Dictyostelium discoideum (Social amoeba).